The sequence spans 108 residues: Parvalbumin beta (108 aa).

EF-hand domains lie at 38 to 73 and 77 to 108; these read KPTDQVKKVFDILDQDKSGYIEEDELQLFLKNFCSS and LSNAETKAFLFAGDSDGDGKIGVDEFQALVRS. Ca(2+) contacts are provided by aspartate 51, aspartate 53, serine 55, tyrosine 57, glutamate 59, glutamate 62, aspartate 90, aspartate 92, aspartate 94, lysine 96, and glutamate 101.

This sequence belongs to the parvalbumin family.

In muscle, parvalbumin is thought to be involved in relaxation after contraction. It binds two calcium ions. In Amphiuma means (Salamander), this protein is Parvalbumin beta.